The primary structure comprises 406 residues: Homocysteine-responsive endoplasmic reticulum-resident ubiquitin-like domain member 2 protein (406 aa).

Residues 10-89 (VTLIIKAPNQ…HMVHLVCTSR (80 aa)) form the Ubiquitin-like domain. Residues 86 to 156 (CTSRTPPSSP…PQAQTDPAQS (71 aa)) form a disordered region. Composition is skewed to low complexity over residues 87–98 (TSRTPPSSPKSS) and 109–139 (SNSN…SSSE). Polar residues predominate over residues 145-156 (TLPQAQTDPAQS). A helical transmembrane segment spans residues 302–322 (FIMVMGAMLLVYLHQAGWFPF).

The protein resides in the membrane. Could be involved in the unfolded protein response (UPR) pathway. This chain is Homocysteine-responsive endoplasmic reticulum-resident ubiquitin-like domain member 2 protein (HERPUD2), found in Bos taurus (Bovine).